Here is a 206-residue protein sequence, read N- to C-terminus: Thymidylate kinase (206 aa).

11–18 serves as a coordination point for ATP; that stretch reads GIDGAGKT.

The protein belongs to the thymidylate kinase family.

The enzyme catalyses dTMP + ATP = dTDP + ADP. Its function is as follows. Phosphorylation of dTMP to form dTDP in both de novo and salvage pathways of dTTP synthesis. This chain is Thymidylate kinase, found in Burkholderia lata (strain ATCC 17760 / DSM 23089 / LMG 22485 / NCIMB 9086 / R18194 / 383).